Reading from the N-terminus, the 209-residue chain is Large ribosomal subunit protein uL3 (209 aa).

The residue at position 150 (Gln150) is an N5-methylglutamine.

Belongs to the universal ribosomal protein uL3 family. In terms of assembly, part of the 50S ribosomal subunit. Forms a cluster with proteins L14 and L19. Methylated by PrmB.

One of the primary rRNA binding proteins, it binds directly near the 3'-end of the 23S rRNA, where it nucleates assembly of the 50S subunit. This is Large ribosomal subunit protein uL3 from Proteus mirabilis (strain HI4320).